The following is a 29-amino-acid chain: Cyclotide mela-1 (29 aa).

The cyclopeptide (Gly-Asp) cross-link spans 1-29 (GKYTCGETCFKGKCYTPGCTCSYPICKKD). Disulfide bonds link cysteine 5/cysteine 19, cysteine 9/cysteine 21, and cysteine 14/cysteine 26.

Post-translationally, this is a cyclic peptide. In terms of processing, contains 3 disulfide bonds.

In terms of biological role, probably participates in a plant defense mechanism (Potential). Binds to and induces leakage in phospholipd membranes, particularly ones containing 1-palmitoyl-2-oleophosphatidylethanolamine (POPE). In vitro, displays cytotoxicity against cultured cells but no hemolytic activity towards fresh erythrocytes. Not active against Gram-negative bacterium E.coli ATCC 25922 or Gram-positive bacterium S.aureus ATCC 25923 up to a concentration of 64 uM. The chain is Cyclotide mela-1 from Melicytus latifolius (Norfolk Island mahoe).